A 165-amino-acid polypeptide reads, in one-letter code: Bacterial non-heme ferritin (165 aa).

The region spanning 1–145 (MLKPEMIEKL…SIIDKLSLAG (145 aa)) is the Ferritin-like diiron domain. The Fe cation site is built by Glu17, Glu49, Glu50, His53, Glu94, Glu126, Gln127, and Glu130.

It belongs to the ferritin family. Prokaryotic subfamily. In terms of assembly, homooligomer of 24 subunits that assemble into a spherical protein shell (12 +/- 1 nM diameter) that can sequester at least 2000 iron atoms.

It localises to the cytoplasm. The catalysed reaction is 4 Fe(2+) + O2 + 6 H2O = 4 iron(III) oxide-hydroxide + 12 H(+). Functionally, iron-storage protein. The chain is Bacterial non-heme ferritin (ftnA) from Escherichia coli O157:H7.